Reading from the N-terminus, the 752-residue chain is Iron-sulfur clusters transporter ABCB7, mitochondrial (752 aa).

A mitochondrion-targeting transit peptide spans 1–22 (MALLAMHSWRWAAAAAAFEKRR). The Mitochondrial matrix segment spans residues 23–140 (HSAILIRPLV…KDRPDLRARV (118 aa)). An ABC transmembrane type-1 domain is found at 140-436 (VAISLGFLGG…LGTVYRETRQ (297 aa)). Residues 141 to 161 (AISLGFLGGAKAMNIVVPFMF) traverse the membrane as a helical segment. Residues 162–185 (KYAVDSLNQMSGNMLNLSDAPNTV) are Mitochondrial intermembrane-facing. A helical transmembrane segment spans residues 186-206 (ATMATAVLIGYGVSRAGAAFF). Residues 207 to 259 (NEVRNAVFGKVAQNSIRRIAKNVFLHLHNLDLGFHLSRQTGALSKAIDRGTRG) are Mitochondrial matrix-facing. Residues Lys216 and Lys251 each carry the N6-acetyllysine modification. Residues 260–280 (ISFVLSALVFNLLPIMFEVML) traverse the membrane as a helical segment. The Mitochondrial intermembrane portion of the chain corresponds to 281-290 (VSGVLYYKCG). The helical transmembrane segment at 291-311 (AQFALVTLGTLGTYTAFTVAV) threads the bilayer. At 312 to 382 (TRWRTRFRIE…TLAMLNFGQS (71 aa)) the chain is on the mitochondrial matrix side. Residue 315–319 (RTRFR) coordinates glutathione. A Phosphoserine modification is found at Ser336. The residue at position 340 (Tyr340) is a Phosphotyrosine. Thr342 is subject to Phosphothreonine. Position 378–381 (378–381 (NFGQ)) interacts with glutathione. A helical transmembrane segment spans residues 383 to 403 (AIFSVGLTAIMVLASQGIVAG). Residues 404-409 (TLTVGD) lie on the Mitochondrial intermembrane side of the membrane. Residues 410-430 (LVMVNGLLFQLSLPLNFLGTV) traverse the membrane as a helical segment. Gly428 provides a ligand contact to glutathione. Residues 431 to 752 (YRETRQALID…SVKGCGNCSC (322 aa)) are Mitochondrial matrix-facing. The 235-residue stretch at 472-706 (VAFDNVHFEY…PHSIYSEMWH (235 aa)) folds into the ABC transporter domain. Residues Tyr481 and 505–516 (GGSGSGKSTIVR) each bind ATP.

Belongs to the ABC transporter superfamily. ABCB family. Heavy Metal importer (TC 3.A.1.210) subfamily. Homodimer or heterodimer. Interacts with C10orf88/PAAT. Forms a complex with ABCB10 and FECH, where a dimeric FECH bridges ABCB7 and ABCB10 homodimers; this complex may be required for cellular iron homeostasis, mitochondrial function and heme biosynthesis. Interacts with FECH. Interacts with ATP5F1A. Interacts with COX4I1; this interaction allows the regulation of cellular iron homeostasis and cellular reactive oxygen species (ROS) levels in cardiomyocytes.

The protein resides in the mitochondrion inner membrane. It catalyses the reaction (glutathione)4[2Fe(III)-2S] cluster(in) + ATP + H2O = (glutathione)4[2Fe(III)-2S] cluster(out) + ADP + phosphate + H(+). Its activity is regulated as follows. ATPase activity is stimulated by glutathione. In terms of biological role, exports glutathione-coordinated iron-sulfur clusters such as [2Fe-2S]-(GS)4 cluster from the mitochondria to the cytosol in an ATP-dependent manner allowing the assembly of the cytosolic iron-sulfur (Fe/S) cluster-containing proteins and participates in iron homeostasis. Moreover, through a functional complex formed of ABCB7, FECH and ABCB10, also plays a role in the cellular iron homeostasis, mitochondrial function and heme biosynthesis. In cardiomyocytes, regulates cellular iron homeostasis and cellular reactive oxygen species (ROS) levels through its interaction with COX4I1. May also play a role in hematopoiesis. This is Iron-sulfur clusters transporter ABCB7, mitochondrial from Homo sapiens (Human).